Reading from the N-terminus, the 494-residue chain is Tripartite motif-containing protein 5 (494 aa).

An N-acetylalanine modification is found at A2. The segment at 15-59 (CPICLELLTQPLSLDCGHSFCQACLTANHKTSMPDEGERSCPVCR) adopts an RING-type zinc-finger fold. S86 carries the post-translational modification Phosphoserine. The segment at 91–133 (QKVDHCARHGEKLLLFCREDRKVICWLCERSQEHRGHHTFLTE) adopts a B box-type zinc-finger fold. Positions 96, 99, 118, and 124 each coordinate Zn(2+). Residues 132 to 241 (TEEVAQEYQM…LISDLEHRLQ (110 aa)) adopt a coiled-coil conformation. Residues 186 to 199 (FEQLRHILDWVESN) form a required for interaction with GABARAP and for autophagy region. Positions 282-494 (LKVMLEVLRE…VPMTLCSPSS (213 aa)) constitute a B30.2/SPRY domain.

The protein belongs to the TRIM/RBCC family. As to quaternary structure, can form homodimers and homotrimers. In addition to lower-order dimerization, also exhibits a higher-order multimerization and both low- and high-order multimerizations are essential for its restriction activity. Interacts with BTBD1 and BTBD2. Interacts with PSMC4, PSMC5, PSMD7 and HSPA8/HSC70. Interacts (via B30.2/SPRY domain) with HSPA1A/B. Interacts with PSMC2, MAP3K7/TAK1, TAB2 and TAB3. Interacts with SQSTM1. Interacts with TRIM6 and TRIM34. Interacts with ULK1 (phosphorylated form), GABARAP, GABARAPL1, GABARAPL2, MAP1LC3A, MAP1LC3C and BECN1. Degraded in a proteasome-independent fashion in the absence of viral infection but in a proteasome-dependent fashion following exposure to restriction sensitive virus. In terms of processing, autoubiquitinated in a RING finger- and UBE2D2-dependent manner. Monoubiquitinated by TRIM21. Deubiquitinated by Yersinia YopJ. Ubiquitination may not lead to proteasomal degradation.

Its subcellular location is the cytoplasm. It is found in the nucleus. The catalysed reaction is S-ubiquitinyl-[E2 ubiquitin-conjugating enzyme]-L-cysteine + [acceptor protein]-L-lysine = [E2 ubiquitin-conjugating enzyme]-L-cysteine + N(6)-ubiquitinyl-[acceptor protein]-L-lysine.. Its pathway is protein modification; protein ubiquitination. In terms of biological role, capsid-specific restriction factor that prevents infection from non-host-adapted retroviruses. Blocks viral replication early in the life cycle, after viral entry but before reverse transcription. In addition to acting as a capsid-specific restriction factor, also acts as a pattern recognition receptor that activates innate immune signaling in response to the retroviral capsid lattice. Binding to the viral capsid triggers its E3 ubiquitin ligase activity, and in concert with the heterodimeric ubiquitin conjugating enzyme complex UBE2V1-UBE2N (also known as UBC13-UEV1A complex) generates 'Lys-63'-linked polyubiquitin chains, which in turn are catalysts in the autophosphorylation of the MAP3K7/TAK1 complex (includes TAK1, TAB2, and TAB3). Activation of the MAP3K7/TAK1 complex by autophosphorylation results in the induction and expression of NF-kappa-B and MAPK-responsive inflammatory genes, thereby leading to an innate immune response in the infected cell. Plays a role in regulating autophagy through activation of autophagy regulator BECN1 by causing its dissociation from its inhibitors BCL2 and TAB2. The polypeptide is Tripartite motif-containing protein 5 (TRIM5) (Hoolock hoolock (Western hoolock gibbon)).